We begin with the raw amino-acid sequence, 150 residues long: SsrA-binding protein (150 aa).

Residues 129–150 are disordered; the sequence is ETEKQRDWQREKSRIMKGGSKE.

It belongs to the SmpB family.

The protein resides in the cytoplasm. Required for rescue of stalled ribosomes mediated by trans-translation. Binds to transfer-messenger RNA (tmRNA), required for stable association of tmRNA with ribosomes. tmRNA and SmpB together mimic tRNA shape, replacing the anticodon stem-loop with SmpB. tmRNA is encoded by the ssrA gene; the 2 termini fold to resemble tRNA(Ala) and it encodes a 'tag peptide', a short internal open reading frame. During trans-translation Ala-aminoacylated tmRNA acts like a tRNA, entering the A-site of stalled ribosomes, displacing the stalled mRNA. The ribosome then switches to translate the ORF on the tmRNA; the nascent peptide is terminated with the 'tag peptide' encoded by the tmRNA and targeted for degradation. The ribosome is freed to recommence translation, which seems to be the essential function of trans-translation. The sequence is that of SsrA-binding protein from Cupriavidus pinatubonensis (strain JMP 134 / LMG 1197) (Cupriavidus necator (strain JMP 134)).